The sequence spans 471 residues: MTDLPDSTRWQLWIVAFGFFMQSLDTTIVNTALPSMAQSLGESPLHMHMVIVSYVLTVAVMLPASGWLADKVGVRNIFFTAIVLFTLGSLFCALSGTLNELLLARALQGVGGAMMVPVGRLTVMKIVPREQYMAAMTFVTLPGQVGPLLGPALGGLLVEYASWHWIFLINIPVGIIGAIATLMLMPNYTMQTRRFDLSGFLLLAVGMAVLTLALDGSKGTGLSPLAITGLVAVGVVALVLYLLHARNNHRALFSLKLFRTRTFSLGLAGSFAGRIGSGMLPFMTPVFLQIGLGFSPFHAGLMMIPMVLGSMGMKRIVVQVVNRFGYRRVLVATTLGLSLVTLLFMTTALLGWYYVLPFVLFLQGMVNSTRFSSMNTLTLKDLPDNLASSGNSLLSMIMQLSMSIGVTIAGLLLGLFGSQHVSVDSGTTQTVFMYTWLSMAFIIALPAFIFARVPNDTHQNVAISRRKRSAQ.

The Periplasmic portion of the chain corresponds to 1 to 11 (MTDLPDSTRWQ). A helical transmembrane segment spans residues 12 to 32 (LWIVAFGFFMQSLDTTIVNTA). Residues 33-48 (LPSMAQSLGESPLHMH) are Cytoplasmic-facing. Residues 49-69 (MVIVSYVLTVAVMLPASGWLA) form a helical membrane-spanning segment. Topologically, residues 70–76 (DKVGVRN) are periplasmic. A helical membrane pass occupies residues 77–97 (IFFTAIVLFTLGSLFCALSGT). Over 98–101 (LNEL) the chain is Cytoplasmic. The helical transmembrane segment at 102 to 124 (LLARALQGVGGAMMVPVGRLTVM) threads the bilayer. The Periplasmic portion of the chain corresponds to 125–137 (KIVPREQYMAAMT). The helical transmembrane segment at 138 to 158 (FVTLPGQVGPLLGPALGGLLV) threads the bilayer. Topologically, residues 159-164 (EYASWH) are cytoplasmic. Residues 165-185 (WIFLINIPVGIIGAIATLMLM) traverse the membrane as a helical segment. At 186-196 (PNYTMQTRRFD) the chain is on the periplasmic side. The chain crosses the membrane as a helical span at residues 197-217 (LSGFLLLAVGMAVLTLALDGS). At 218 to 224 (KGTGLSP) the chain is on the cytoplasmic side. A helical membrane pass occupies residues 225 to 245 (LAITGLVAVGVVALVLYLLHA). The Periplasmic portion of the chain corresponds to 246-262 (RNNHRALFSLKLFRTRT). The chain crosses the membrane as a helical span at residues 263–283 (FSLGLAGSFAGRIGSGMLPFM). Topologically, residues 284 to 285 (TP) are cytoplasmic. Residues 286-306 (VFLQIGLGFSPFHAGLMMIPM) form a helical membrane-spanning segment. Residues 307-341 (VLGSMGMKRIVVQVVNRFGYRRVLVATTLGLSLVT) are Periplasmic-facing. A helical membrane pass occupies residues 342–362 (LLFMTTALLGWYYVLPFVLFL). The Cytoplasmic segment spans residues 363 to 395 (QGMVNSTRFSSMNTLTLKDLPDNLASSGNSLLS). The chain crosses the membrane as a helical span at residues 396 to 416 (MIMQLSMSIGVTIAGLLLGLF). Residues 417–430 (GSQHVSVDSGTTQT) lie on the Periplasmic side of the membrane. A helical transmembrane segment spans residues 431–451 (VFMYTWLSMAFIIALPAFIFA). Over 452–471 (RVPNDTHQNVAISRRKRSAQ) the chain is Cytoplasmic.

The protein belongs to the major facilitator superfamily. TCR/Tet family.

Its subcellular location is the cell inner membrane. In Escherichia coli O127:H6 (strain E2348/69 / EPEC), this protein is Putative multidrug resistance protein MdtD.